Reading from the N-terminus, the 100-residue chain is Urease subunit gamma (100 aa).

This sequence belongs to the urease gamma subunit family. In terms of assembly, heterotrimer of UreA (gamma), UreB (beta) and UreC (alpha) subunits. Three heterotrimers associate to form the active enzyme.

Its subcellular location is the cytoplasm. It carries out the reaction urea + 2 H2O + H(+) = hydrogencarbonate + 2 NH4(+). The protein operates within nitrogen metabolism; urea degradation; CO(2) and NH(3) from urea (urease route): step 1/1. The protein is Urease subunit gamma of Streptomyces griseus subsp. griseus (strain JCM 4626 / CBS 651.72 / NBRC 13350 / KCC S-0626 / ISP 5235).